The chain runs to 267 residues: uncharacterized protein (267 aa).

Positions 2 to 198 (LGANGAGKTT…FRNKFIVIEG (197 aa)) constitute an ABC transporter domain. 3-10 (GANGAGKT) provides a ligand contact to ATP.

Belongs to the ABC transporter superfamily.

This is an uncharacterized protein from Alkalihalophilus pseudofirmus (strain ATCC BAA-2126 / JCM 17055 / OF4) (Bacillus pseudofirmus).